The following is a 300-amino-acid chain: HTH-type transcriptional regulator ArgP (300 aa).

One can recognise an HTH lysR-type domain in the interval 4–60 (FDYKLLAALAAVVEQGGFERAAQALGLSQSAVSQRIKLLEARVGQPVLVRETPPHPT). Residues 21-40 (FERAAQALGLSQSAVSQRIK) constitute a DNA-binding region (H-T-H motif).

Belongs to the LysR transcriptional regulatory family. Homodimer.

In terms of biological role, controls the transcription of genes involved in arginine and lysine metabolism. This chain is HTH-type transcriptional regulator ArgP, found in Pseudomonas aeruginosa (strain UCBPP-PA14).